The chain runs to 641 residues: Raffinose carrier protein (641 aa).

Residues Met1 to Asn506 form a permease region. The next 12 helical transmembrane spans lie at Ala25–Thr45, Leu57–Gly77, Trp93–Gly113, Ala120–Phe140, Leu168–Phe188, Trp201–Leu221, Leu253–Leu273, Phe288–Val308, Gly317–Gly337, Leu342–Leu362, Phe394–Thr414, and Phe429–Ser449. Residues Asp507–Asn611 enclose the PTS EIIA type-1 domain. His559 bears the Phosphohistidine; by HPr mark.

In the N-terminal section; belongs to the sodium:galactoside symporter (TC 2.A.2) family.

It localises to the cell membrane. This Pediococcus pentosaceus protein is Raffinose carrier protein (rafP).